A 406-amino-acid chain; its full sequence is Calreticulin (406 aa).

A signal peptide spans 1-17 (MMWCKTVIVLLATVGFI). A disulfide bond links Cys-105 and Cys-137. Positions 109, 111, 128, and 135 each coordinate an alpha-D-glucoside. 7 consecutive repeat copies span residues 191–202 (VESGNLEDDWDF), 210–221 (DPTATKPEDWDD), 227–238 (DPDDKKPEDWDK), 244–255 (DPDATKPEDWDD), 259–269 (GEWEPPMIDNP), 273–283 (GEWQPKQLDNP), and 287–297 (GAWEHPEIANP). Positions 191–255 (VESGNLEDDW…DATKPEDWDD (65 aa)) are 4 X approximate repeats. Positions 207–251 (KIKDPTATKPEDWDDRATIPDPDDKKPEDWDKPEHIPDPDATKPE) are enriched in basic and acidic residues. A disordered region spans residues 207–259 (KIKDPTATKPEDWDDRATIPDPDDKKPEDWDKPEHIPDPDATKPEDWDDEMDG). The 3 X approximate repeats stretch occupies residues 259 to 297 (GEWEPPMIDNPEFKGEWQPKQLDNPNYKGAWEHPEIANP). An alpha-D-glucoside is bound at residue Asp-317. Residues 347-406 (KNTQAGEKKMKEAQDEVQRKKDEEEAKKASDKDDEDEDDDDEEKDDESKQDKDQSEHDEL) form a disordered region. Residues 352–377 (GEKKMKEAQDEVQRKKDEEEAKKASD) are compositionally biased toward basic and acidic residues. Over residues 378–391 (KDDEDEDDDDEEKD) the composition is skewed to acidic residues. Residues 392-406 (DESKQDKDQSEHDEL) show a composition bias toward basic and acidic residues.

The protein belongs to the calreticulin family.

Its subcellular location is the endoplasmic reticulum lumen. In terms of biological role, molecular calcium-binding chaperone promoting folding, oligomeric assembly and quality control in the ER via the calreticulin/calnexin cycle. This lectin may interact transiently with almost all of the monoglucosylated glycoproteins that are synthesized in the ER. The sequence is that of Calreticulin from Drosophila melanogaster (Fruit fly).